The chain runs to 345 residues: Phosphoribosylformylglycinamidine cyclo-ligase (345 aa).

This sequence belongs to the AIR synthase family.

It is found in the cytoplasm. The enzyme catalyses 2-formamido-N(1)-(5-O-phospho-beta-D-ribosyl)acetamidine + ATP = 5-amino-1-(5-phospho-beta-D-ribosyl)imidazole + ADP + phosphate + H(+). Its pathway is purine metabolism; IMP biosynthesis via de novo pathway; 5-amino-1-(5-phospho-D-ribosyl)imidazole from N(2)-formyl-N(1)-(5-phospho-D-ribosyl)glycinamide: step 2/2. This chain is Phosphoribosylformylglycinamidine cyclo-ligase, found in Shewanella oneidensis (strain ATCC 700550 / JCM 31522 / CIP 106686 / LMG 19005 / NCIMB 14063 / MR-1).